The following is a 925-amino-acid chain: Coronin-7 (925 aa).

WD repeat units lie at residues 75–115 (CHSD…QALP), 124–163 (PEDL…PLTE), 166–205 (AHGD…RASQ), and 209–253 (AHEN…SALA). Residues 419-461 (VGDADASEGFSSPPSSLTSPSTPSSLGPSLSSTSGIGTSPSLR) are disordered. Over residues 429–460 (SSPPSSLTSPSTPSSLGPSLSSTSGIGTSPSL) the composition is skewed to low complexity. A phosphoserine mark is found at Ser-462 and Ser-465. A Glycyl lysine isopeptide (Lys-Gly) (interchain with G-Cter in ubiquitin) cross-link involves residue Lys-472. WD repeat units follow at residues 542–582 (QNGA…LEEV), 592–632 (GHTE…DRLK), and 635–674 (GHQD…EPLQ). Residue Lys-680 forms a Glycyl lysine isopeptide (Lys-Gly) (interchain with G-Cter in ubiquitin) linkage. Residues 728-768 (DVAPSTLLPSYDPDTGLVLLTGKGDTRVFLYELLPESPFFL) form a WD 8 repeat. Residues 858–925 (QPPDMSPVSQ…FEGVDEDEWD (68 aa)) form a disordered region. The segment covering 866–882 (SQAPREAPARRAPSSAQ) has biased composition (low complexity). Positions 884-896 (LEEKSDQQKKEEL) are enriched in basic and acidic residues. At Ser-915 the chain carries Phosphoserine.

Belongs to the WD repeat coronin family. In terms of assembly, interacts with clathrin adapter AP1 complex. This interaction takes place at Golgi membranes and not AP1-positive endosomal membranes. Interacts (when ubiquitinated at Lys-472) with EPS15. The membrane-associated form is phosphorylated on tyrosine residues. In terms of processing, ubiquitinated via 'Lys-33'-linked ubiquitin chains by the BCR(KLHL20) E3 ubiquitin ligase complex: 'Lys-33'-linked ubiquitination promotes interaction with EPS15 and facilitates actin polymerization at the trans-Golgi network, thereby facilitating post-Golgi trafficking. Deubiquitinated by ZRANB1/TRABID. In terms of tissue distribution, widely expressed. Expressed in the spleen, peripheral leukocytes, testes, brain, thymus and small intestine.

The protein localises to the golgi apparatus membrane. The protein resides in the golgi apparatus. It localises to the trans-Golgi network. Its subcellular location is the cytoplasmic vesicle. It is found in the cytoplasm. The protein localises to the cytosol. Its function is as follows. F-actin regulator involved in anterograde Golgi to endosome transport: upon ubiquitination via 'Lys-33'-linked ubiquitin chains by the BCR(KLHL20) E3 ubiquitin ligase complex, interacts with EPS15 and localizes to the trans-Golgi network, where it promotes actin polymerization, thereby facilitating post-Golgi trafficking. May play a role in the maintenance of the Golgi apparatus morphology. This is Coronin-7 (CORO7) from Homo sapiens (Human).